The primary structure comprises 150 residues: UPF0756 membrane protein Asuc_1151 (150 aa).

Transmembrane regions (helical) follow at residues 1 to 21 (MSLHFNSIGFLLVVLALLGVL), 52 to 72 (YGLNIGVIILTIGVLSPIVAG), 82 to 102 (LLHWKMFLSLVVGMLVAWLAG), and 123 to 143 (ILGVGLLGGIPVGPLIAAGIL).

It belongs to the UPF0756 family.

It localises to the cell membrane. The polypeptide is UPF0756 membrane protein Asuc_1151 (Actinobacillus succinogenes (strain ATCC 55618 / DSM 22257 / CCUG 43843 / 130Z)).